Here is a 156-residue protein sequence, read N- to C-terminus: Large ribosomal subunit protein uL13 (156 aa).

The protein belongs to the universal ribosomal protein uL13 family. As to quaternary structure, part of the 50S ribosomal subunit.

In terms of biological role, this protein is one of the early assembly proteins of the 50S ribosomal subunit, although it is not seen to bind rRNA by itself. It is important during the early stages of 50S assembly. This is Large ribosomal subunit protein uL13 from Archaeoglobus fulgidus (strain ATCC 49558 / DSM 4304 / JCM 9628 / NBRC 100126 / VC-16).